We begin with the raw amino-acid sequence, 527 residues long: Peptide chain release factor 3 (527 aa).

One can recognise a tr-type G domain in the interval 9 to 277; the sequence is AKRRTFAIIS…AVVDWAPRPL (269 aa). GTP-binding positions include 18–25, 86–90, and 140–143; these read SHPDAGKT, DTPGH, and NKLD.

The protein belongs to the TRAFAC class translation factor GTPase superfamily. Classic translation factor GTPase family. PrfC subfamily.

It localises to the cytoplasm. Its function is as follows. Increases the formation of ribosomal termination complexes and stimulates activities of RF-1 and RF-2. It binds guanine nucleotides and has strong preference for UGA stop codons. It may interact directly with the ribosome. The stimulation of RF-1 and RF-2 is significantly reduced by GTP and GDP, but not by GMP. This is Peptide chain release factor 3 from Pseudomonas fluorescens (strain SBW25).